We begin with the raw amino-acid sequence, 673 residues long: UvrABC system protein B (673 aa).

Residues 26–183 (EGLEDGLAHQ…RRLAELQYAR (158 aa)) enclose the Helicase ATP-binding domain. 39 to 46 (GVTGSGKT) is a binding site for ATP. Positions 92-115 (YYDYYQPEAYVPSSDTFIEKDASV) match the Beta-hairpin motif. The 167-residue stretch at 431 to 597 (QVDDLLSEIR…GLNKKVVDIL (167 aa)) folds into the Helicase C-terminal domain. The disordered stretch occupies residues 608 to 627 (AKGRGKSRPIVEPDNVPMDM). The region spanning 633–668 (QQKIHELEGLMMQHAQNLEFEEAAQIRDQLHLLREL) is the UVR domain.

Belongs to the UvrB family. Forms a heterotetramer with UvrA during the search for lesions. Interacts with UvrC in an incision complex.

It is found in the cytoplasm. Its function is as follows. The UvrABC repair system catalyzes the recognition and processing of DNA lesions. A damage recognition complex composed of 2 UvrA and 2 UvrB subunits scans DNA for abnormalities. Upon binding of the UvrA(2)B(2) complex to a putative damaged site, the DNA wraps around one UvrB monomer. DNA wrap is dependent on ATP binding by UvrB and probably causes local melting of the DNA helix, facilitating insertion of UvrB beta-hairpin between the DNA strands. Then UvrB probes one DNA strand for the presence of a lesion. If a lesion is found the UvrA subunits dissociate and the UvrB-DNA preincision complex is formed. This complex is subsequently bound by UvrC and the second UvrB is released. If no lesion is found, the DNA wraps around the other UvrB subunit that will check the other stand for damage. This chain is UvrABC system protein B, found in Escherichia coli O81 (strain ED1a).